Here is a 210-residue protein sequence, read N- to C-terminus: Probable nicotinate-nucleotide adenylyltransferase (210 aa).

This sequence belongs to the NadD family.

It carries out the reaction nicotinate beta-D-ribonucleotide + ATP + H(+) = deamido-NAD(+) + diphosphate. It participates in cofactor biosynthesis; NAD(+) biosynthesis; deamido-NAD(+) from nicotinate D-ribonucleotide: step 1/1. Functionally, catalyzes the reversible adenylation of nicotinate mononucleotide (NaMN) to nicotinic acid adenine dinucleotide (NaAD). This Vesicomyosocius okutanii subsp. Calyptogena okutanii (strain HA) protein is Probable nicotinate-nucleotide adenylyltransferase.